The chain runs to 232 residues: Ubiquinone biosynthesis O-methyltransferase (232 aa).

The S-adenosyl-L-methionine site is built by Arg36, Gly55, Asp76, and Leu120.

The protein belongs to the methyltransferase superfamily. UbiG/COQ3 family.

It carries out the reaction a 3-demethylubiquinol + S-adenosyl-L-methionine = a ubiquinol + S-adenosyl-L-homocysteine + H(+). The catalysed reaction is a 3-(all-trans-polyprenyl)benzene-1,2-diol + S-adenosyl-L-methionine = a 2-methoxy-6-(all-trans-polyprenyl)phenol + S-adenosyl-L-homocysteine + H(+). Its pathway is cofactor biosynthesis; ubiquinone biosynthesis. Functionally, O-methyltransferase that catalyzes the 2 O-methylation steps in the ubiquinone biosynthetic pathway. The sequence is that of Ubiquinone biosynthesis O-methyltransferase from Dechloromonas aromatica (strain RCB).